A 3680-amino-acid polypeptide reads, in one-letter code: Dystrophin (3680 aa).

Residues 1–237 (MLWWEEVEDC…ILMYITSLFQ (237 aa)) form an actin-binding region. Calponin-homology (CH) domains are found at residues 15-119 (DVQK…LHWQ) and 134-240 (TNSE…QVLP). Residues 63-72 (PKEKGSTRVH) are ANK2- and ANK-3 binding. Over residues 310 to 323 (TSDPTRSPLPSQHL) the composition is skewed to polar residues. The disordered stretch occupies residues 310-332 (TSDPTRSPLPSQHLETPEDKSFG). Spectrin repeat units follow at residues 340–448 (ANLD…NLHK), 449–557 (VLMD…LLQD), 560–668 (LKWQ…QISQ), 720–829 (EIRK…WLEY), 831–935 (NNII…ELQT), 944–1047 (RYQE…KLEE), 1050–1156 (AKLR…ALKG), 1159–1265 (DKTV…TLEE), 1268–1369 (ACWH…LLEQ), 1370–1465 (SIQS…LFQK), 1470–1570 (EQRL…QLEK), 1573–1678 (KLSR…LLLE), 1681–1780 (KHME…KASI), 1781–1876 (PLKE…KALE), 1879–1981 (HQWY…TVHE), 1994–2103 (EISY…RFDR), 2106–2210 (EKWR…RLEE), 2213–2320 (NILS…EIEA), 2321–2418 (HVKD…LRAK), 2470–2572 (FNRA…QLTE), 2575–2681 (KDST…ALEE), 2684–2797 (RLLQ…HLEA), 2803–2925 (KRLH…RKID), and 2930–3035 (RLQE…QLHE). An interaction with SYNM region spans residues 1418 to 1915 (DLTSHEISLE…PEPRDERKIK (498 aa)). The region spanning 3050-3083 (TSVQGPWERAISPNKVPYYINHETQTTCWDHPKM) is the WW domain. The segment at 3053–3403 (QGPWERAISP…TVLEGDNMET (351 aa)) is interaction with SYNM. The ZZ-type; degenerate zinc-finger motif lies at 3303–3359 (KHQAKCNICKECPIIGFRYRSLKHFNYDICQSCFFSGRVAKGHKMHYPMVEYCTPTT). 4 residues coordinate Zn(2+): Cys-3308, Cys-3311, Cys-3332, and Cys-3335. The segment at 3461-3513 (DDEHLLIQHYWRSLNQESPLSQPRSPAQILISLESEERGELERILADLEGRNR) is binds to SNTB1. 3 positions are modified to phosphoserine: Ser-3478, Ser-3485, and Ser-3495. Disordered regions lie at residues 3524 to 3549 (QQHEHKGLSPLPSPPEMMPTSPQSPR) and 3595 to 3680 (PQAE…EDTM). 2 stretches are compositionally biased toward polar residues: residues 3602 to 3621 (NGTTVSSPSTSLQRSDSSQP) and 3658 to 3668 (LNHSFPSSRGR). Phosphoserine is present on residues Ser-3607, Ser-3608, Ser-3612, Ser-3618, Ser-3619, and Ser-3661.

In terms of assembly, interacts with SYNM. Interacts with the syntrophins SNTG1 and SNTG2. Interacts with KRT19. Component of the dystrophin-associated glycoprotein complex which is composed of three subcomplexes: a cytoplasmic complex comprised of DMD (or UTRN), DTNA and a number of syntrophins, such as SNTB1, SNTB2, SNTG1 and SNTG2, the transmembrane dystroglycan complex, and the sarcoglycan-sarcospan complex. Interacts with DAG1 (betaDAG1) with DMD; the interaction is inhibited by phosphorylation on the PPXY motif of DAG1. Interacts with SYNM; SNTA1 and SNTB1. Interacts with CMYA5. Directly interacts with ANK2 and ANK3; these interactions do not interfere with betaDAG1-binding and are necessary for proper localization in muscle cells. Identified in a dystroglycan complex that contains at least PRX, DRP2, UTRN, DMD and DAG1. Interacts with DTNB. Interacts with PGM5; the interaction is direct. Interacts with NOS1; localizes NOS1 to sarcolemma in muscle cells.

The protein resides in the cell membrane. It localises to the sarcolemma. The protein localises to the cytoplasm. Its subcellular location is the cytoskeleton. It is found in the postsynaptic cell membrane. Its function is as follows. Anchors the extracellular matrix to the cytoskeleton via F-actin. Ligand for dystroglycan. Component of the dystrophin-associated glycoprotein complex which accumulates at the neuromuscular junction (NMJ) and at a variety of synapses in the peripheral and central nervous systems and has a structural function in stabilizing the sarcolemma. Also implicated in signaling events and synaptic transmission. This Canis lupus familiaris (Dog) protein is Dystrophin (DMD).